Consider the following 550-residue polypeptide: Methionine--tRNA ligase (550 aa).

Positions 13–23 (PYANGPLHFGH) match the 'HIGH' region motif. Zn(2+) is bound by residues Cys-145, Cys-148, Cys-158, and Cys-161. The 'KMSKS' region motif lies at 331–335 (QFSKS). Lys-334 is an ATP binding site.

This sequence belongs to the class-I aminoacyl-tRNA synthetase family. MetG type 1 subfamily. As to quaternary structure, monomer. Requires Zn(2+) as cofactor.

Its subcellular location is the cytoplasm. It carries out the reaction tRNA(Met) + L-methionine + ATP = L-methionyl-tRNA(Met) + AMP + diphosphate. Functionally, is required not only for elongation of protein synthesis but also for the initiation of all mRNA translation through initiator tRNA(fMet) aminoacylation. This is Methionine--tRNA ligase (metG) from Chlamydia trachomatis serovar D (strain ATCC VR-885 / DSM 19411 / UW-3/Cx).